Here is a 78-residue protein sequence, read N- to C-terminus: Small ribosomal subunit protein bS20 (78 aa).

It belongs to the bacterial ribosomal protein bS20 family.

Functionally, binds directly to 16S ribosomal RNA. In Streptococcus thermophilus (strain ATCC BAA-491 / LMD-9), this protein is Small ribosomal subunit protein bS20.